The following is a 362-amino-acid chain: MLKVGSSLLAADGGGLSPRFALGLAQFVSANLAAGREVVIVSSGAVAAGRAILPKAAEAGAAIAARQALAALGQAQLIALWQRFFERPVAQVLLTHDDLRNRRRYLNARATLGELLRLGALPVINENDTVSVDELKLGDNDNLAAIVAALVDADALFIATDIDGLYSADPRSNPLARPLDEVAELSAEVLAMAGGSGSSVGTGGMRTKLEAAAKAGAAGIETYLFNGRSAEVVRGLAQDRLCGTRIHAARTRIAARKYWLRHAPVEPGTILIDAGAALALTDKGASLLPGGVAGAEGDFRRGDMVEIHLRDSVGSRCLARGVSQYSALDVRRIARRHSREIEPILGYSYGENVVHRDDLVVL.

Lys-3 contributes to the ATP binding site. Residues Ser-43, Asp-128, and Asn-140 each contribute to the substrate site. ATP contacts are provided by residues Thr-160–Asp-161 and Thr-202–Lys-208. The PUA domain maps to Pro-267 to Ser-348.

This sequence belongs to the glutamate 5-kinase family.

It is found in the cytoplasm. The enzyme catalyses L-glutamate + ATP = L-glutamyl 5-phosphate + ADP. It functions in the pathway amino-acid biosynthesis; L-proline biosynthesis; L-glutamate 5-semialdehyde from L-glutamate: step 1/2. In terms of biological role, catalyzes the transfer of a phosphate group to glutamate to form L-glutamate 5-phosphate. The polypeptide is Glutamate 5-kinase (Xanthomonas campestris pv. campestris (strain 8004)).